Consider the following 291-residue polypeptide: UPF0173 metal-dependent hydrolase Rmet_5695 (291 aa).

Belongs to the UPF0173 family.

This Cupriavidus metallidurans (strain ATCC 43123 / DSM 2839 / NBRC 102507 / CH34) (Ralstonia metallidurans) protein is UPF0173 metal-dependent hydrolase Rmet_5695.